The following is a 131-amino-acid chain: Ribosome-binding factor A (131 aa).

It belongs to the RbfA family. In terms of assembly, monomer. Binds 30S ribosomal subunits, but not 50S ribosomal subunits or 70S ribosomes.

Its subcellular location is the cytoplasm. In terms of biological role, one of several proteins that assist in the late maturation steps of the functional core of the 30S ribosomal subunit. Associates with free 30S ribosomal subunits (but not with 30S subunits that are part of 70S ribosomes or polysomes). Required for efficient processing of 16S rRNA. May interact with the 5'-terminal helix region of 16S rRNA. This Mannheimia succiniciproducens (strain KCTC 0769BP / MBEL55E) protein is Ribosome-binding factor A.